Reading from the N-terminus, the 499-residue chain is Aldehyde dehydrogenase 1 (499 aa).

NAD(+) contacts are provided by residues 164–166 (IPW), 164–167 (IPWN), 190–193 (KPAE), 223–224 (GS), 243–244 (GS), 243–248 (GSTKVG), and 266–268 (ELG). Glu-266 acts as the Proton acceptor in catalysis. Residue Cys-300 is the Nucleophile of the active site. Residues 346 to 350 (QQYEK) and 397 to 399 (EIF) contribute to the NAD(+) site.

It belongs to the aldehyde dehydrogenase family. Homotetramer. Expressed in flowers and disk florets.

The enzyme catalyses an aldehyde + NAD(+) + H2O = a carboxylate + NADH + 2 H(+). It catalyses the reaction an aldehyde + NADP(+) + H2O = a carboxylate + NADPH + 2 H(+). The catalysed reaction is octanal + NADP(+) + H2O = octanoate + NADPH + 2 H(+). It carries out the reaction (1R,3R)-chrysanthemal + NAD(+) + H2O = (1R,3R)-chrysanthemate + NADH + 2 H(+). The enzyme catalyses (1R,3R)-chrysanthemal + NADP(+) + H2O = (1R,3R)-chrysanthemate + NADPH + 2 H(+). It catalyses the reaction (E)-hept-2-enal + NADP(+) + H2O = (E)-hept-2-enoate + NADPH + 2 H(+). The catalysed reaction is dodecanal + NADP(+) + H2O = dodecanoate + NADPH + 2 H(+). It carries out the reaction citral + NADP(+) + H2O = 3,7-dimethylocta-2,6-dienoate + NADPH + 2 H(+). The enzyme catalyses perillyl aldehyde + NADP(+) + H2O = perillate + NADPH + 2 H(+). It catalyses the reaction (2E,6E)-farnesal + NADP(+) + H2O = (2E,6E)-farnesoate + NADPH + 2 H(+). The catalysed reaction is (S)-(-)-citronellal + NADP(+) + H2O = (S)-(-)-citronellate + NADPH + 2 H(+). It functions in the pathway isoprenoid biosynthesis. Component of the monoterpenoid pyrethrins biosynthesis; pyrethrins are widely used plant-derived pesticide. Mediates the conversion of trans-chrysanthemal into trans-chrysanthemic acid. Can also use octanal, hept-2-enal, dodecanal, citral, farnesal, citronellal and perillyl aldehyde as substrates. This Tanacetum cinerariifolium (Dalmatian daisy) protein is Aldehyde dehydrogenase 1.